The sequence spans 498 residues: ATP synthase subunit beta, chloroplastic (498 aa).

T6 carries the post-translational modification Phosphothreonine. Phosphoserine is present on S13. 172-179 (GGAGVGKT) serves as a coordination point for ATP.

The protein belongs to the ATPase alpha/beta chains family. F-type ATPases have 2 components, CF(1) - the catalytic core - and CF(0) - the membrane proton channel. CF(1) has five subunits: alpha(3), beta(3), gamma(1), delta(1), epsilon(1). CF(0) has four main subunits: a(1), b(1), b'(1) and c(9-12).

The protein localises to the plastid. The protein resides in the chloroplast thylakoid membrane. The enzyme catalyses ATP + H2O + 4 H(+)(in) = ADP + phosphate + 5 H(+)(out). Produces ATP from ADP in the presence of a proton gradient across the membrane. The catalytic sites are hosted primarily by the beta subunits. This chain is ATP synthase subunit beta, chloroplastic, found in Brassica napus (Rape).